The sequence spans 289 residues: MAVVERDSDYYDSSYLADYYESLWTDHAALEDIAVYWAFFKERVLLSQSRVDSKFFLLDVGTGTGRVLHSLIDKAVNDADMSLDAMQFVGMDKSPFMLEQAQRAKQLPQEVRASWFVGTATALEDIASLADPHGKANLLIFAFSGINHLHQPGEIDQFFLSARRVLLPGGLALVSVCAPLLDIEGGDSVPNPYGQVKEVKSKRLEGILYREWETGQKIEGHLFTNSLKTDVVQVSQDGSERVIERNIHNIPLTLLTRDGLRRSAAAAKLEIIEERCIRDEVIFALRAVG.

It belongs to the methyltransferase superfamily.

The enzyme catalyses (1S,4S)-4-[(4-hydroxyphenyl)methyl]-2,5-diazaspiro[bicyclo[3.2.1]octane-6,1'-cyclohexan]-4'-one + S-adenosyl-L-methionine = (1S,4S)-4-[(4-hydroxyphenyl)methyl]-2-methyl-2,5-diazaspiro[bicyclo[3.2.1]octane-6,1'-cyclohexan]-4'-one + S-adenosyl-L-homocysteine + H(+). It carries out the reaction (1S,4S)-4-[(4-methoxyphenyl)methyl]-2,5-diazaspiro[bicyclo[3.2.1]octane-6,1'-cyclohexan]-4'-one + S-adenosyl-L-methionine = (1S,4S)-4-[(4-methoxyphenyl)methyl]-2-methyl-2,5-diazaspiro[bicyclo[3.2.1]octane-6,1'-cyclohexan]-4'-one + S-adenosyl-L-homocysteine + H(+). Its pathway is secondary metabolite biosynthesis. Its function is as follows. N-methyltransferase; part of the gene cluster that mediates the biosynthesis of the alkaloid (-)-FR901483, a potent immunosuppressant that shows efficacy in animal models and a probable inhibitor of purine nucleotide biosynthesis by targeting phosphoribosylpyrophosphate amidotransferase (PPAT). Within the pathway, FrzE methylates the amine at position C10'. The biosynthesis of (-)-FR901483 starts with the condensation of two L-tyrosines to yield (S,S)-dityrosyl-piperazine. This process occurs in 3 steps with the non-canonical nonribosomal peptide synthetase FrzA catalyzing the reduction of L-tyrosine into L-tyrosinal, the spontaneous condensation of 2 L-tyrosinal units, and the subsequent reduction by the NmrA-like family domain-containing oxidoreductase FrzB. The cytochrome P450 monooxygenase FrzC then performs coupling between N10 and C1' to morph the piperazine into a 1,4-diazabicyclo[3.2.1]octane spiro-fused to a 2,5-cyclohexadienone. The dienone portion is further reduced to cyclohexanone by the flavin-dependent reductase FrzD. The methyltranserases (MTs) FrzE and FrzF are then involved in the methylation at the C10' amine and the C4 phenolic oxygen, respectively. The order of the two MTs appear to be interchangeable. Cleavage of the C9-N10' bond by the dioxygenase FrzG then leads to formation of a conjugated iminium. In addition to the oxidation of C9, an additional dehydrogenation between C7 and C8 can occur to give a likely shunt product. The next biosynthetic step is the intramolecular aldol condensation catalyzed by the newly identified aldolase FrzH to yield an aza-tricyclic product with the formation of a C9-C3' bond. The short-chain dehydrogenase/reductase FrzI then produces dephospho-(-)-FR901483 that is phosphorylated at C4'-OH into (-)-FR901483 by the phosphotransferase FrzJ. This is N-methyltransferase FrzE from Cladobotryum sp.